Here is a 1207-residue protein sequence, read N- to C-terminus: DNA-directed RNA polymerase subunit beta' (1207 aa).

Cys-60, Cys-62, Cys-75, and Cys-78 together coordinate Zn(2+). Mg(2+) contacts are provided by Asp-450, Asp-452, and Asp-454. 4 residues coordinate Zn(2+): Cys-819, Cys-893, Cys-900, and Cys-903.

It belongs to the RNA polymerase beta' chain family. In terms of assembly, the RNAP catalytic core consists of 2 alpha, 1 beta, 1 beta' and 1 omega subunit. When a sigma factor is associated with the core the holoenzyme is formed, which can initiate transcription. The cofactor is Mg(2+). Requires Zn(2+) as cofactor.

It catalyses the reaction RNA(n) + a ribonucleoside 5'-triphosphate = RNA(n+1) + diphosphate. Its function is as follows. DNA-dependent RNA polymerase catalyzes the transcription of DNA into RNA using the four ribonucleoside triphosphates as substrates. The protein is DNA-directed RNA polymerase subunit beta' of Streptococcus pyogenes serotype M3 (strain SSI-1).